Here is a 459-residue protein sequence, read N- to C-terminus: Cysteine--tRNA ligase (459 aa).

Zn(2+) is bound at residue C28. A 'HIGH' region motif is present at residues 30–40 (VTIYDLCHIGH). Positions 209, 234, and 238 each coordinate Zn(2+). A 'KMSKS' region motif is present at residues 266 to 270 (KMSKS). An ATP-binding site is contributed by K269.

It belongs to the class-I aminoacyl-tRNA synthetase family. In terms of assembly, monomer. It depends on Zn(2+) as a cofactor.

The protein resides in the cytoplasm. It carries out the reaction tRNA(Cys) + L-cysteine + ATP = L-cysteinyl-tRNA(Cys) + AMP + diphosphate. This chain is Cysteine--tRNA ligase, found in Shewanella piezotolerans (strain WP3 / JCM 13877).